A 188-amino-acid chain; its full sequence is uncharacterized protein (188 aa).

A helical membrane pass occupies residues 136–156 (TLVKLLLLFLSLMVVIVGVWW).

The protein resides in the host membrane. This is an uncharacterized protein from Magallana gigas (Pacific oyster).